The chain runs to 388 residues: MSASRPNRVVLVLNSGSSSLKFQLVEPDSGMSRATGNIERIGEESSSVPDHDAALRRVFEILAEDDIDLQSCGLVAVGHRVVHGGKDFYEPTLLNDAVIGKLDELSPLAPLHNPPAVLCIRVARALLPDVPHIAVFDTAFFHQLPPAAATYAIDRELADVWKIRRYGFHGTSHEYVSQQAAEFLGKPIGDLNQIVLHLGNGASASAVAGGRPVETSMGLTPLEGLVMGTRSGDLDPGVIGYLWRTAKLGVDEIESMLNHRSGMLGLAGERDFRRLRAMIDDGDPAAELAYDVFIHRLRKYVGAYLAVLGHTDVVSFTAGIGEHDAAVRRDTLAGMAELGISLDERRNACPSGGARRISADDSPVTVLVIPTNEELAIARHCCSVLVAV.

N14 contacts Mg(2+). K21 is a binding site for ATP. R80 serves as a coordination point for substrate. Catalysis depends on D137, which acts as the Proton donor/acceptor. Residues 197–201 (HLGNG), 271–273 (DFR), and 319–323 (GIGEH) contribute to the ATP site. Residue E373 coordinates Mg(2+).

This sequence belongs to the acetokinase family. In terms of assembly, homodimer. Requires Mg(2+) as cofactor. Mn(2+) is required as a cofactor.

The protein localises to the cytoplasm. The enzyme catalyses acetate + ATP = acetyl phosphate + ADP. It participates in metabolic intermediate biosynthesis; acetyl-CoA biosynthesis; acetyl-CoA from acetate: step 1/2. Catalyzes the formation of acetyl phosphate from acetate and ATP. Can also catalyze the reverse reaction. This is Acetate kinase from Mycobacterium marinum (strain ATCC BAA-535 / M).